We begin with the raw amino-acid sequence, 93 residues long: YcgL domain-containing protein Shal_1837 (93 aa).

One can recognise a YcgL domain in the interval Met-1–Lys-85.

This Shewanella halifaxensis (strain HAW-EB4) protein is YcgL domain-containing protein Shal_1837.